Here is a 118-residue protein sequence, read N- to C-terminus: Large ribosomal subunit protein bL20 (118 aa).

The protein belongs to the bacterial ribosomal protein bL20 family.

Binds directly to 23S ribosomal RNA and is necessary for the in vitro assembly process of the 50S ribosomal subunit. It is not involved in the protein synthesizing functions of that subunit. In Leptothrix cholodnii (strain ATCC 51168 / LMG 8142 / SP-6) (Leptothrix discophora (strain SP-6)), this protein is Large ribosomal subunit protein bL20.